A 365-amino-acid chain; its full sequence is Flagellar P-ring protein (365 aa).

An N-terminal signal peptide occupies residues 1-19 (MIKFLSALILLLVITAAQA).

It belongs to the FlgI family. As to quaternary structure, the basal body constitutes a major portion of the flagellar organelle and consists of four rings (L,P,S, and M) mounted on a central rod.

Its subcellular location is the periplasm. The protein localises to the bacterial flagellum basal body. In terms of biological role, assembles around the rod to form the L-ring and probably protects the motor/basal body from shearing forces during rotation. The sequence is that of Flagellar P-ring protein from Escherichia coli O81 (strain ED1a).